The chain runs to 512 residues: MEEFKGYLQKGGFKQQHFLYPLLFQEYIYALAHDQGLNVNASTFTEPPEISGYHNKYSSLLVKRLIKRIYQQNRFIYSVTNSKQNRFVGHNNHFYSQMISEGFSSVVEIPFSPRLVSSLKKKKEIPKYQNLRSIHSLFPFLEDKFTHLTYVSDILIPYPVHLEILVQILQCWIQDVPTLHLLRLLFHEYHNGNNSITPNKSTYGFSKDNPRLYRFLYNSYVVECESIFLFLRKSSSYLRSRSFGPLLERTQFYGKMKHIGVTCCNDFHKSLCLFKDPFMHYVRYQGKSIMASKGTDFLMKKWKSYFVNLWQYRFHFWSEPSRIHINQFPHFSFYFLGYLSSVPINLSYAKSQMLENSFLIETFTQKFETMISIIPMIGSLAKAKFCNLSGNPISKPAWADLSDSDIIDRFGRIYRNLSHYYSGSSKKQTLYRIKYILRLSCARTLARKHKSTVRAFLQRLGSEFFEEFFMEEEKVLSLILARTSYSSHQLSREPVWYLDIVRINDLVNHLDL.

It belongs to the intron maturase 2 family. MatK subfamily.

It is found in the plastid. The protein localises to the chloroplast. In terms of biological role, usually encoded in the trnK tRNA gene intron. Probably assists in splicing its own and other chloroplast group II introns. This chain is Maturase K, found in Lemna aequinoctialis (Lesser duckweed).